Reading from the N-terminus, the 311-residue chain is Aspartate carbamoyltransferase catalytic subunit (311 aa).

Residues Arg55 and Thr56 each contribute to the carbamoyl phosphate site. Lys85 serves as a coordination point for L-aspartate. Carbamoyl phosphate is bound by residues Arg106, His135, and Gln138. Residues Arg168 and Arg230 each coordinate L-aspartate. Positions 268 and 269 each coordinate carbamoyl phosphate.

This sequence belongs to the aspartate/ornithine carbamoyltransferase superfamily. ATCase family. As to quaternary structure, heterododecamer (2C3:3R2) of six catalytic PyrB chains organized as two trimers (C3), and six regulatory PyrI chains organized as three dimers (R2).

It carries out the reaction carbamoyl phosphate + L-aspartate = N-carbamoyl-L-aspartate + phosphate + H(+). It functions in the pathway pyrimidine metabolism; UMP biosynthesis via de novo pathway; (S)-dihydroorotate from bicarbonate: step 2/3. Functionally, catalyzes the condensation of carbamoyl phosphate and aspartate to form carbamoyl aspartate and inorganic phosphate, the committed step in the de novo pyrimidine nucleotide biosynthesis pathway. The protein is Aspartate carbamoyltransferase catalytic subunit of Pectobacterium carotovorum subsp. carotovorum (strain PC1).